We begin with the raw amino-acid sequence, 83 residues long: Beta-toxin Ct25 (83 aa).

Residues 1-18 (MKVLILIIASVLLIGVEC) form the signal peptide. The 63-residue stretch at 19 to 81 (KDGYPKNSEG…VWDSATNKCG (63 aa)) folds into the LCN-type CS-alpha/beta domain. Intrachain disulfides connect Cys29/Cys80, Cys33/Cys54, Cys40/Cys61, and Cys44/Cys63. Gly81 carries the glycine amide modification.

Belongs to the long (4 C-C) scorpion toxin superfamily. Sodium channel inhibitor family. Beta subfamily. Expressed by the venom gland.

It is found in the secreted. Its function is as follows. Beta toxins bind voltage-independently at site-4 of sodium channels (Nav) and shift the voltage of activation toward more negative potentials thereby affecting sodium channel activation and promoting spontaneous and repetitive firing. This Centruroides tecomanus (Scorpion) protein is Beta-toxin Ct25.